A 120-amino-acid chain; its full sequence is Large ribosomal subunit protein uL22 (120 aa).

Positions 1–20 are disordered; sequence MFVNRRYTARGKNLPSSPKK.

The protein belongs to the universal ribosomal protein uL22 family. As to quaternary structure, part of the 50S ribosomal subunit.

This protein binds specifically to 23S rRNA; its binding is stimulated by other ribosomal proteins, e.g. L4, L17, and L20. It is important during the early stages of 50S assembly. It makes multiple contacts with different domains of the 23S rRNA in the assembled 50S subunit and ribosome. Functionally, the globular domain of the protein is located near the polypeptide exit tunnel on the outside of the subunit, while an extended beta-hairpin is found that lines the wall of the exit tunnel in the center of the 70S ribosome. The protein is Large ribosomal subunit protein uL22 of Borrelia turicatae (strain 91E135).